The chain runs to 109 residues: Thiosulfate sulfurtransferase GlpE (109 aa).

Residues 16–104 (RAEGAVVVDI…WRSTYPGETA (89 aa)) form the Rhodanese domain. The active-site Cysteine persulfide intermediate is cysteine 64.

The protein belongs to the GlpE family.

It is found in the cytoplasm. It carries out the reaction thiosulfate + hydrogen cyanide = thiocyanate + sulfite + 2 H(+). The enzyme catalyses thiosulfate + [thioredoxin]-dithiol = [thioredoxin]-disulfide + hydrogen sulfide + sulfite + 2 H(+). In terms of biological role, transferase that catalyzes the transfer of sulfur from thiosulfate to thiophilic acceptors such as cyanide or dithiols. May function in a CysM-independent thiosulfate assimilation pathway by catalyzing the conversion of thiosulfate to sulfite, which can then be used for L-cysteine biosynthesis. The chain is Thiosulfate sulfurtransferase GlpE from Pseudomonas entomophila (strain L48).